A 374-amino-acid chain; its full sequence is Beta sliding clamp (374 aa).

This sequence belongs to the beta sliding clamp family. Forms a ring-shaped head-to-tail homodimer around DNA which binds and tethers DNA polymerases and other proteins to the DNA. The DNA replisome complex has a single clamp-loading complex (3 tau and 1 each of delta, delta', psi and chi subunits) which binds 3 Pol III cores (1 core on the leading strand and 2 on the lagging strand) each with a beta sliding clamp dimer. Additional proteins in the replisome are other copies of gamma, psi and chi, Ssb, DNA helicase and RNA primase.

The protein resides in the cytoplasm. Its function is as follows. Confers DNA tethering and processivity to DNA polymerases and other proteins. Acts as a clamp, forming a ring around DNA (a reaction catalyzed by the clamp-loading complex) which diffuses in an ATP-independent manner freely and bidirectionally along dsDNA. Initially characterized for its ability to contact the catalytic subunit of DNA polymerase III (Pol III), a complex, multichain enzyme responsible for most of the replicative synthesis in bacteria; Pol III exhibits 3'-5' exonuclease proofreading activity. The beta chain is required for initiation of replication as well as for processivity of DNA replication. The protein is Beta sliding clamp (dnaN) of Helicobacter pylori (strain J99 / ATCC 700824) (Campylobacter pylori J99).